The chain runs to 527 residues: Glucose-6-phosphate isomerase (527 aa).

The Proton donor role is filled by glutamate 323. Residues histidine 352 and lysine 454 contribute to the active site.

This sequence belongs to the GPI family.

It localises to the cytoplasm. It catalyses the reaction alpha-D-glucose 6-phosphate = beta-D-fructose 6-phosphate. It functions in the pathway carbohydrate biosynthesis; gluconeogenesis. The protein operates within carbohydrate degradation; glycolysis; D-glyceraldehyde 3-phosphate and glycerone phosphate from D-glucose: step 2/4. In terms of biological role, catalyzes the reversible isomerization of glucose-6-phosphate to fructose-6-phosphate. This is Glucose-6-phosphate isomerase from Prochlorococcus marinus (strain MIT 9215).